The following is a 254-amino-acid chain: Gamma-glutamyl-gamma-aminobutyrate hydrolase (254 aa).

Residues 16–250 (RNRLKGHATQ…ITACQHHIAE (235 aa)) enclose the Glutamine amidotransferase type-1 domain. The active-site Nucleophile is the Cys114. Catalysis depends on residues His222 and Glu224.

This sequence belongs to the peptidase C26 family.

The enzyme catalyses 4-(gamma-L-glutamylamino)butanoate + H2O = 4-aminobutanoate + L-glutamate. It participates in amine and polyamine degradation; putrescine degradation; 4-aminobutanoate from putrescine: step 4/4. In terms of biological role, involved in the breakdown of putrescine via hydrolysis of the gamma-glutamyl linkage of gamma-glutamyl-gamma-aminobutyrate. The sequence is that of Gamma-glutamyl-gamma-aminobutyrate hydrolase (puuD) from Escherichia coli O157:H7.